We begin with the raw amino-acid sequence, 89 residues long: Meiosis expressed gene 1 protein homolog (89 aa).

It belongs to the MEIG1 family.

The polypeptide is Meiosis expressed gene 1 protein homolog (Nematostella vectensis (Starlet sea anemone)).